The sequence spans 444 residues: Phosphoglucosamine mutase (444 aa).

Ser-102 functions as the Phosphoserine intermediate in the catalytic mechanism. Mg(2+) contacts are provided by Ser-102, Asp-241, Asp-243, and Asp-245. A Phosphoserine modification is found at Ser-102.

The protein belongs to the phosphohexose mutase family. Mg(2+) is required as a cofactor. Activated by phosphorylation.

The catalysed reaction is alpha-D-glucosamine 1-phosphate = D-glucosamine 6-phosphate. Functionally, catalyzes the conversion of glucosamine-6-phosphate to glucosamine-1-phosphate. This Actinobacillus pleuropneumoniae serotype 5b (strain L20) protein is Phosphoglucosamine mutase.